The chain runs to 336 residues: Speedy protein E1 (336 aa).

Positions 16-50 (GVDPSPPCRSLGWKRKREWSDESEEEPEKELAPEP) are disordered. Positions 36–50 (DESEEEPEKELAPEP) are enriched in acidic residues.

This sequence belongs to the Speedy/Ringo family. Predominantly expressed in testis and heart.

This chain is Speedy protein E1, found in Homo sapiens (Human).